A 127-amino-acid polypeptide reads, in one-letter code: Putative pre-16S rRNA nuclease (127 aa).

The protein belongs to the YqgF nuclease family.

It is found in the cytoplasm. In terms of biological role, could be a nuclease involved in processing of the 5'-end of pre-16S rRNA. This is Putative pre-16S rRNA nuclease from Campylobacter jejuni subsp. jejuni serotype O:6 (strain 81116 / NCTC 11828).